The sequence spans 37 residues: Cytochrome b6-f complex subunit 5 (37 aa).

Residues 5–25 (LLCGIVLGLIPVTLAGLFFAA) traverse the membrane as a helical segment.

It belongs to the PetG family. The 4 large subunits of the cytochrome b6-f complex are cytochrome b6, subunit IV (17 kDa polypeptide, PetD), cytochrome f and the Rieske protein, while the 4 small subunits are PetG, PetL, PetM and PetN. The complex functions as a dimer.

The protein resides in the cellular thylakoid membrane. Its function is as follows. Component of the cytochrome b6-f complex, which mediates electron transfer between photosystem II (PSII) and photosystem I (PSI), cyclic electron flow around PSI, and state transitions. PetG is required for either the stability or assembly of the cytochrome b6-f complex. The sequence is that of Cytochrome b6-f complex subunit 5 from Thermosynechococcus vestitus (strain NIES-2133 / IAM M-273 / BP-1).